Here is a 159-residue protein sequence, read N- to C-terminus: Fatty acid-binding protein homolog 1 (159 aa).

A signal peptide spans 1 to 17 (MCAKIALLLVLVGAASA).

This sequence belongs to the calycin superfamily. Fatty-acid binding protein (FABP) family. First detected in hypodermal precursor cells at the time of gastrulation. From the two-fold stage through to three-fold stages, expression is localized exclusively to hyp-7 but disappears in newly hatched L1s and subsequent developmental stages. Expression from L1 to adult stages is found in a single neuron in the ventral cord with a process into the nerve ring.

It is found in the secreted. In terms of biological role, may play a role in sequestering potentially toxic fatty acids and their peroxidation products, or it may be involved in the maintenance of the impermeable lipid layer of the eggshell. The polypeptide is Fatty acid-binding protein homolog 1 (lbp-1) (Caenorhabditis elegans).